Here is a 61-residue protein sequence, read N- to C-terminus: Large ribosomal subunit protein bL28 (61 aa).

The segment at 1–26 is disordered; sequence MAKDFVTGKHTRFGNTRSHALNHSRR.

It belongs to the bacterial ribosomal protein bL28 family.

In Pediococcus pentosaceus (strain ATCC 25745 / CCUG 21536 / LMG 10740 / 183-1w), this protein is Large ribosomal subunit protein bL28.